Reading from the N-terminus, the 361-residue chain is Phospho-N-acetylmuramoyl-pentapeptide-transferase (361 aa).

A run of 10 helical transmembrane segments spans residues 25-45 (RAVM…PWVI), 73-93 (TMGG…WADL), 97-117 (YVWL…YDDW), 132-152 (FKMA…IATA), 167-187 (TVAY…VIVG), 200-220 (GLAA…AYVA), 240-260 (VVVF…FNAY), 264-284 (VFMG…VAVI), 289-309 (IVLF…MIQV), and 338-358 (QVVV…LSTL).

Belongs to the glycosyltransferase 4 family. MraY subfamily. The cofactor is Mg(2+).

Its subcellular location is the cell inner membrane. It carries out the reaction UDP-N-acetyl-alpha-D-muramoyl-L-alanyl-gamma-D-glutamyl-meso-2,6-diaminopimeloyl-D-alanyl-D-alanine + di-trans,octa-cis-undecaprenyl phosphate = di-trans,octa-cis-undecaprenyl diphospho-N-acetyl-alpha-D-muramoyl-L-alanyl-D-glutamyl-meso-2,6-diaminopimeloyl-D-alanyl-D-alanine + UMP. The protein operates within cell wall biogenesis; peptidoglycan biosynthesis. Catalyzes the initial step of the lipid cycle reactions in the biosynthesis of the cell wall peptidoglycan: transfers peptidoglycan precursor phospho-MurNAc-pentapeptide from UDP-MurNAc-pentapeptide onto the lipid carrier undecaprenyl phosphate, yielding undecaprenyl-pyrophosphoryl-MurNAc-pentapeptide, known as lipid I. The sequence is that of Phospho-N-acetylmuramoyl-pentapeptide-transferase from Chromobacterium violaceum (strain ATCC 12472 / DSM 30191 / JCM 1249 / CCUG 213 / NBRC 12614 / NCIMB 9131 / NCTC 9757 / MK).